Reading from the N-terminus, the 174-residue chain is UPF0398 protein YfdB (174 aa).

This sequence belongs to the UPF0398 family.

This chain is UPF0398 protein YfdB (yfdB), found in Lactococcus lactis subsp. lactis (strain IL1403) (Streptococcus lactis).